The chain runs to 399 residues: Glutamyl-tRNA reductase (399 aa).

Substrate contacts are provided by residues 45 to 48 (TCNR), Ser-101, 106 to 108 (EDQ), and Gln-112. Cys-46 acts as the Nucleophile in catalysis. 177-182 (GFGKIG) lines the NADP(+) pocket.

This sequence belongs to the glutamyl-tRNA reductase family. Homodimer.

It catalyses the reaction (S)-4-amino-5-oxopentanoate + tRNA(Glu) + NADP(+) = L-glutamyl-tRNA(Glu) + NADPH + H(+). Its pathway is porphyrin-containing compound metabolism; protoporphyrin-IX biosynthesis; 5-aminolevulinate from L-glutamyl-tRNA(Glu): step 1/2. Its function is as follows. Catalyzes the NADPH-dependent reduction of glutamyl-tRNA(Glu) to glutamate 1-semialdehyde (GSA). The protein is Glutamyl-tRNA reductase of Clostridium kluyveri (strain ATCC 8527 / DSM 555 / NBRC 12016 / NCIMB 10680 / K1).